The sequence spans 2259 residues: Golgin subfamily A member 4 (2259 aa).

The segment at 1–54 (MFKKLKQKISEEQQQLQQALAPAQASSSSSTPTRTRSRTSSFTDQLDDATPNRE) is disordered. Ser10 carries the post-translational modification Phosphoserine. The segment covering 12–41 (EQQQLQQALAPAQASSSSSTPTRTRSRTSS) has biased composition (low complexity). Thr39 carries the phosphothreonine modification. Residues Ser41, Ser104, and Ser111 each carry the phosphoserine modification. The tract at residues 165–235 (SLSREQLLQR…EELQMDQQAK (71 aa)) is interaction with MACF1. The stretch at 167 to 2182 (SREQLLQRLR…SYEKSVCAAA (2016 aa)) forms a coiled coil. Basic and acidic residues-rich tracts occupy residues 1932–1946 (LEDR…HVIE) and 1954–1977 (DGRH…LSKE). Residues 1932–1977 (LEDRPEENSKSHVIESKLGTPMDGRHSDLESKLAGSEREKQKLSKE) are disordered. The 48-residue stretch at 2199–2246 (LFGEPTEFEYLRKVLFEYMMGRETKTMAKVITTVLRFPDDQAQKILER) folds into the GRIP domain.

In terms of assembly, homodimer. Interacts with GTP-bound ARL1 and ARL3. Interacts with MACF1. Directly interacts with TBC1D23. Interacts with FAM91A1; this interaction may be mediated by TBC1D23. Expressed in the head of epididymal sperm but not in testicular sperm (at protein level).

The protein localises to the cytoplasm. It localises to the golgi apparatus membrane. Its subcellular location is the golgi apparatus. The protein resides in the trans-Golgi network membrane. In terms of biological role, involved in vesicular trafficking at the Golgi apparatus level. May play a role in delivery of transport vesicles containing GPI-linked proteins from the trans-Golgi network through its interaction with MACF1. Involved in endosome-to-Golgi trafficking. This chain is Golgin subfamily A member 4, found in Rattus norvegicus (Rat).